The following is a 103-amino-acid chain: Co-chaperonin GroES (103 aa).

Belongs to the GroES chaperonin family. Heptamer of 7 subunits arranged in a ring. Interacts with the chaperonin GroEL.

It is found in the plastid. It localises to the cyanelle. In terms of biological role, together with the chaperonin GroEL, plays an essential role in assisting protein folding. The GroEL-GroES system forms a nano-cage that allows encapsulation of the non-native substrate proteins and provides a physical environment optimized to promote and accelerate protein folding. GroES binds to the apical surface of the GroEL ring, thereby capping the opening of the GroEL channel. This Cyanophora paradoxa protein is Co-chaperonin GroES.